Reading from the N-terminus, the 644-residue chain is Core protein VP4 (644 aa).

It belongs to the orbivirus VP4 family.

It localises to the virion. In terms of biological role, the VP4 protein is one of the five proteins (with VP1, VP3, VP6 and VP7) which form the inner capsid of the virus. In Bluetongue virus 2 (isolate USA) (BTV 2), this protein is Core protein VP4 (Segment-4).